Consider the following 688-residue polypeptide: UvrABC system protein C (688 aa).

Positions 1–14 (MSPLDQKNKPRGGA) are enriched in basic and acidic residues. Residues 1-20 (MSPLDQKNKPRGGADDLPPE) are disordered. The region spanning 71–149 (NAPGVYRMMN…IKRLRPRFNV (79 aa)) is the GIY-YIG domain. The UVR domain occupies 259–294 (QKVKTEISAAMQQASEDLDFERAAIYRDRLAALSHV).

Belongs to the UvrC family. As to quaternary structure, interacts with UvrB in an incision complex.

Its subcellular location is the cytoplasm. Its function is as follows. The UvrABC repair system catalyzes the recognition and processing of DNA lesions. UvrC both incises the 5' and 3' sides of the lesion. The N-terminal half is responsible for the 3' incision and the C-terminal half is responsible for the 5' incision. The polypeptide is UvrABC system protein C (Mesorhizobium japonicum (strain LMG 29417 / CECT 9101 / MAFF 303099) (Mesorhizobium loti (strain MAFF 303099))).